A 499-amino-acid chain; its full sequence is Probable cytochrome P450 cyp-35D1 (499 aa).

Cys444 contributes to the heme binding site.

It belongs to the cytochrome P450 family. Heme is required as a cofactor. As to expression, expressed in hypodermis, intestine and vulva upon thiabendazole (TBZ) exposure.

Cytochromes P450 are a group of heme-thiolate monooxygenases. They oxidize a variety of structurally unrelated compounds, including steroids, fatty acids, and xenobiotics. Involved in the oxidative metabolism of thiabendazole (TBZ). Catalyzes the conversion of TBZ to its hydroxylated form. The protein is Probable cytochrome P450 cyp-35D1 of Caenorhabditis elegans.